The sequence spans 156 residues: Terrestric acid biosynthesis cluster protein E (156 aa).

It functions in the pathway secondary metabolite biosynthesis. Its function is as follows. Part of the tra gene cluster that produces terrestric acid. The clavatol biosynthesis cluster cla and the terrestric acid cluster tra are both involved in the production of peniphenones and penilactones. The non-reducing PKS claF is responsible for the formation of clavatol from successive condensations of 3 malonyl-CoA units, presumably with a simple acetyl-CoA starter unit, and 2 methylation steps. The esterase claE probably collaborates with claF by catalyzing the hydrolysis of ACP-bound acyl intermediates to free the ACP from stalled intermediates. The clavatol oxidase claD then converts clavatol to hydroxyclavatol. Spontaneous dehydration of hydroxyclavatol leads to the accumulation of the highly active ortho-quinone methide. On the other hand, the PKS-NRPS hybrid traA is involved in the formation of crustosic acid, with the help of traB and traD. The polyketide synthase module (PKS) of traA is responsible for the synthesis of the polyketide backbone via the condensation of an acetyl-CoA starter unit with 3 malonyl-CoA units. The downstream nonribosomal peptide synthetase (NRPS) module then amidates the carboxyl end of the polyketide with L-malic acid. Because traA lacks a designated enoylreductase (ER) domain, the required activity is provided the enoyl reductase traG. Crustosic acid undergoes decarboxylation and isomerization to the terrestric acid, catalyzed by the 2-oxoglutarate-dependent dioxygenase traH. Both acids are further converted to the 2 gamma-butyrolactones (R)-5-methyltetronic acid and (S)-5-carboxylmethyltetronic acid, with involvement of the cytochrome P450 monooxygenase claJ. Spontaneous addition of the methide to these gamma-butyrolactones leads to peniphenone D and penilactone D, which undergo again stereospecific attacking by methide to give penilactones A and B. TraE seems not to be involved in the biosynthesis of peniphenones and penilactones in the conditions used to study its function. This Penicillium crustosum (Blue mold fungus) protein is Terrestric acid biosynthesis cluster protein E.